The following is a 248-amino-acid chain: Ubiquinone biosynthesis O-methyltransferase (248 aa).

S-adenosyl-L-methionine-binding residues include Arg-40, Gly-71, Asp-92, and Met-135.

It belongs to the methyltransferase superfamily. UbiG/COQ3 family.

The enzyme catalyses a 3-demethylubiquinol + S-adenosyl-L-methionine = a ubiquinol + S-adenosyl-L-homocysteine + H(+). It catalyses the reaction a 3-(all-trans-polyprenyl)benzene-1,2-diol + S-adenosyl-L-methionine = a 2-methoxy-6-(all-trans-polyprenyl)phenol + S-adenosyl-L-homocysteine + H(+). It participates in cofactor biosynthesis; ubiquinone biosynthesis. In terms of biological role, O-methyltransferase that catalyzes the 2 O-methylation steps in the ubiquinone biosynthetic pathway. The polypeptide is Ubiquinone biosynthesis O-methyltransferase (Roseobacter denitrificans (strain ATCC 33942 / OCh 114) (Erythrobacter sp. (strain OCh 114))).